The sequence spans 103 residues: Large ribosomal subunit protein bL21 (103 aa).

The protein belongs to the bacterial ribosomal protein bL21 family. As to quaternary structure, part of the 50S ribosomal subunit. Contacts protein L20.

Functionally, this protein binds to 23S rRNA in the presence of protein L20. This chain is Large ribosomal subunit protein bL21, found in Erwinia tasmaniensis (strain DSM 17950 / CFBP 7177 / CIP 109463 / NCPPB 4357 / Et1/99).